A 78-amino-acid chain; its full sequence is U23-theraphotoxin-Cg1a 1 (78 aa).

Residues 1 to 21 (MKTSVLVTVLGLAVISVLCSA) form the signal peptide. A propeptide spanning residues 22 to 49 (SQDEEQDMYDELLSAVFEVNDELQSEAR) is cleaved from the precursor. Intrachain disulfides connect Cys50-Cys64, Cys57-Cys69, and Cys63-Cys75.

This sequence belongs to the neurotoxin 10 (Hwtx-1) family. 64 (Jztx-20) subfamily. Expressed by the venom gland.

The protein localises to the secreted. Probable ion channel inhibitor. This is U23-theraphotoxin-Cg1a 1 from Chilobrachys guangxiensis (Chinese earth tiger tarantula).